Here is a 141-residue protein sequence, read N- to C-terminus: D-aminoacyl-tRNA deacylase (141 aa).

Positions 133 to 134 (GP) match the Gly-cisPro motif, important for rejection of L-amino acids motif.

This sequence belongs to the DTD family. Homodimer.

Its subcellular location is the cytoplasm. It catalyses the reaction glycyl-tRNA(Ala) + H2O = tRNA(Ala) + glycine + H(+). The enzyme catalyses a D-aminoacyl-tRNA + H2O = a tRNA + a D-alpha-amino acid + H(+). In terms of biological role, an aminoacyl-tRNA editing enzyme that deacylates mischarged D-aminoacyl-tRNAs. Also deacylates mischarged glycyl-tRNA(Ala), protecting cells against glycine mischarging by AlaRS. Acts via tRNA-based rather than protein-based catalysis; rejects L-amino acids rather than detecting D-amino acids in the active site. By recycling D-aminoacyl-tRNA to D-amino acids and free tRNA molecules, this enzyme counteracts the toxicity associated with the formation of D-aminoacyl-tRNA entities in vivo and helps enforce protein L-homochirality. The sequence is that of D-aminoacyl-tRNA deacylase from Streptomyces coelicolor (strain ATCC BAA-471 / A3(2) / M145).